Consider the following 445-residue polypeptide: Cryptochrome DASH (445 aa).

Positions 4 to 137 (KIGLYWFTFD…VIVQHSVRSL (134 aa)) constitute a Photolyase/cryptochrome alpha/beta domain.

Belongs to the DNA photolyase class-1 family. FAD is required as a cofactor. (6R)-5,10-methylene-5,6,7,8-tetrahydrofolate serves as cofactor.

Functionally, may have a photoreceptor function. Binds DNA; probably functions as a transcriptional repressor. The protein is Cryptochrome DASH (cry) of Vibrio parahaemolyticus serotype O3:K6 (strain RIMD 2210633).